We begin with the raw amino-acid sequence, 293 residues long: Lysosomal amino acid transporter 1 homolog (293 aa).

Topologically, residues 1-37 (MVWRTLVASNFSTCPNGSIQWIWDVFGECAQDGWDEA) are lumenal. An N-linked (GlcNAc...) asparagine glycan is attached at Asn-10. The region spanning 34–100 (WDEASVALGL…LADQLPLQTY (67 aa)) is the PQ-loop 1 domain. A helical membrane pass occupies residues 38–58 (SVALGLVSIFCFAASTFPQYI). At 59-71 (KACKTGNMDQALS) the chain is on the cytoplasmic side. A helical membrane pass occupies residues 72 to 92 (LWFLLGWIGGDSCNLIGSFLA). Topologically, residues 93-96 (DQLP) are lumenal. The helical transmembrane segment at 97-117 (LQTYTAVYYVLADLLMLTLYF) threads the bilayer. Over 118–126 (HYKFKKQPS) the chain is Cytoplasmic. A helical membrane pass occupies residues 127 to 147 (LLSAPINSVLLFILGTVCITP). The Lumenal segment spans residues 148-182 (LLSSTDPVAVPREGFRGRTLLSVEPGNKPFTKKEV). A helical membrane pass occupies residues 183-203 (VGFVIGSASSVLYLLSRLPQI). The PQ-loop 2 domain occupies 191–243 (SSVLYLLSRLPQIRTNFVRQSTQGISYSLFALVMLGNTLYGLSVLLKNPEVGQ). Topologically, residues 204–214 (RTNFVRQSTQG) are cytoplasmic. A helical transmembrane segment spans residues 215–235 (ISYSLFALVMLGNTLYGLSVL). Residues 236-254 (LKNPEVGQSEGSYLLHHLP) lie on the Lumenal side of the membrane. Residues 255 to 275 (WLVGSLGVLLLDTIISIQFLV) traverse the membrane as a helical segment. At 276–293 (YRSHDADAASEREPLLPS) the chain is on the cytoplasmic side. The Di-leucine motif motif lies at 290–291 (LL).

This sequence belongs to the laat-1 family.

The protein localises to the lysosome membrane. Functionally, amino acid transporter that specifically mediates the pH-dependent export of the cationic amino acids arginine, histidine and lysine from lysosomes. The chain is Lysosomal amino acid transporter 1 homolog (Slc66a1) from Rattus norvegicus (Rat).